Consider the following 362-residue polypeptide: F-box protein At2g14710 (362 aa).

The F-box domain occupies 1–47 (MAHLKNLPWELIEEILSRVPPKSLVRFRTVSKQWNALFDDKTFINNH).

In Arabidopsis thaliana (Mouse-ear cress), this protein is F-box protein At2g14710.